Consider the following 654-residue polypeptide: Endoplasmic reticulum chaperone BiP (654 aa).

The N-terminal stretch at 1-18 (MKLSLVAAMLLLLSAARA) is a signal peptide. Positions 1 to 80 (MKLSLVAAML…EGERLIGDAA (80 aa)) are required for interaction with ELAPOR1. 36-39 (GTTY) lines the ATP pocket. Residue S86 is modified to Phosphoserine. Position 96 (K96) interacts with ATP. The residue at position 125 (K125) is an N6-acetyllysine. The tract at residues 125–280 (KPYIQVDIGG…KKKTGKDVRK (156 aa)) is nucleotide-binding (NBD). Residue Y160 is modified to 3'-nitrotyrosine. K213 bears the N6-acetyllysine mark. An ATP-binding site is contributed by 227 to 229 (GGT). K271 carries the N6-acetyllysine modification. 293–300 (EKAKRALS) contacts ATP. K326 bears the N6-acetyllysine mark. A Glycyl lysine isopeptide (Lys-Gly) (interchain with G-Cter in SUMO2) cross-link involves residue K352. K353 is modified (N6-acetyllysine; alternate). Residue K353 forms a Glycyl lysine isopeptide (Lys-Gly) (interchain with G-Cter in SUMO1); alternate linkage. Residue 364 to 367 (GSTR) participates in ATP binding. Residues 409 to 419 (QDTGDLALLDV) form an interdomain linker region. Residues 420–500 (CPLTLGIETV…PRGVPQIEVT (81 aa)) are substrate-binding (SBD). Position 447 is an N6-succinyllysine (K447). Omega-N-methylarginine is present on R492. An O-AMP-threonine; alternate modification is found at T518. T518 carries the phosphothreonine; alternate modification. Position 585 is an N6,N6,N6-trimethyllysine; by METTL21A; in vitro (K585). K585 bears the N6,N6-dimethyllysine; alternate mark. Residue K585 is modified to N6-methyllysine; alternate. Position 591 is an N6-methyllysine (K591). Positions 633–654 (KLYGSAGPPPTGEEDTAEKDEL) are disordered. Phosphothreonine is present on residues T643 and T648. Over residues 644–654 (GEEDTAEKDEL) the composition is skewed to acidic residues. Residues 651 to 654 (KDEL) carry the Prevents secretion from ER motif.

The protein belongs to the heat shock protein 70 family. As to quaternary structure, monomer and homooligomer; homooligomerization via the interdomain linker inactivates the chaperone activity and acts as a storage of HSPA5/BiP molecules. Interacts with DNAJC1 (via J domain). Component of an EIF2 complex at least composed of CELF1/CUGBP1, CALR, CALR3, EIF2S1, EIF2S2, HSP90B1 and HSPA5. Part of a large chaperone multiprotein complex comprising DNAJB11, HSP90B1, HSPA5, HYOU, PDIA2, PDIA4, PDIA6, PPIB, SDF2L1, UGGT1 and very small amounts of ERP29, but not, or at very low levels, CALR nor CANX. Interacts with TMEM132A and TRIM21. May form a complex with ERLEC1, OS9, SEL1L and SYVN1. Interacts with DNAJC10. Interacts with DNAJB9/ERdj4; leading to recruit HSPA5/BiP to ERN1/IRE1. Interacts with ERN1/IRE1 (via luminal domain); the interaction takes place following interaction with DNAJB9/ERdj4 and leads to inactivate ERN1/IRE1, the interaction also competitively inhibits ERN1 interaction with MANF. Interacts directly with MANF (via SAP domain); the interaction inhibits ATP binding to HSPA5/BiP and subsequent nucleotide exchange. Interacts with EIF2AK3/PERK (via luminal domain); interaction leads to inactivate EIF2AK3/PERK. Interacts with MX1. Interacts with METTL23. Interacts with CEMIP; the interaction induces calcium leakage from the endoplasmic reticulum and cell migration. Interacts with PCSK4 form; the interaction takes place in the endoplasmic reticulum. Interacts with CIPC. Interacts with CCDC88B (via C-terminus); the interaction opposes ERN1-mediated JNK activation, protecting against apoptosis. Interacts with INPP5K; necessary for INPP5K localization at the endoplasmic reticulum. Interacts with MANF; the interaction is direct. Interacts with LOXL2; leading to activate the ERN1/IRE1-XBP1 pathway of the unfolded protein response. Interacts with CLU under stressed condition; interaction increases CLU protein stability; facilitates its retrotranslocation and redistribution to the mitochondria; cooperatively suppress stress-induced apoptosis by stabilizing mitochondrial membrane integrity. Interacts with CCDC47. Interacts with CLN3. Interacts with ELAPOR1; may regulate the function of HSPA5 in apoptosis and cell proliferation. Interacts with CASP7. Interacts with ILDR2; the interaction stabilizes ILDR2 expression. Interacts with ADAM7. In terms of processing, in unstressed cells, AMPylation at Thr-518 by FICD inactivates the chaperome activity: AMPylated form is locked in a relatively inert state and only weakly stimulated by J domain-containing proteins. In response to endoplasmic reticulum stress, de-AMPylation by the same protein, FICD, restores the chaperone activity.

The protein resides in the endoplasmic reticulum lumen. The protein localises to the melanosome. It is found in the cytoplasm. It localises to the cell surface. The enzyme catalyses ATP + H2O = ADP + phosphate + H(+). With respect to regulation, the chaperone activity is regulated by ATP-induced allosteric coupling of the nucleotide-binding (NBD) and substrate-binding (SBD) domains. In the ADP-bound and nucleotide-free (apo) states, the two domains have little interaction. In contrast, in the ATP-bound state the two domains are tightly coupled, which results in drastically accelerated kinetics in both binding and release of polypeptide substrates. J domain-containing co-chaperones (DNAJB9/ERdj4 or DNAJC10/ERdj5) stimulate the ATPase activity and are required for efficient substrate recognition by HSPA5/BiP. Homooligomerization inactivates participating HSPA5/BiP protomers and probably act as reservoirs to store HSPA5/BiP molecules when they are not needed by the cell. Its function is as follows. Endoplasmic reticulum chaperone that plays a key role in protein folding and quality control in the endoplasmic reticulum lumen. Involved in the correct folding of proteins and degradation of misfolded proteins via its interaction with DNAJC10/ERdj5, probably to facilitate the release of DNAJC10/ERdj5 from its substrate. Acts as a key repressor of the EIF2AK3/PERK and ERN1/IRE1-mediated unfolded protein response (UPR). In the unstressed endoplasmic reticulum, recruited by DNAJB9/ERdj4 to the luminal region of ERN1/IRE1, leading to disrupt the dimerization of ERN1/IRE1, thereby inactivating ERN1/IRE1. Also binds and inactivates EIF2AK3/PERK in unstressed cells. Accumulation of misfolded protein in the endoplasmic reticulum causes release of HSPA5/BiP from ERN1/IRE1 and EIF2AK3/PERK, allowing their homodimerization and subsequent activation. Plays an auxiliary role in post-translational transport of small presecretory proteins across endoplasmic reticulum (ER). May function as an allosteric modulator for SEC61 channel-forming translocon complex, likely cooperating with SEC62 to enable the productive insertion of these precursors into SEC61 channel. Appears to specifically regulate translocation of precursors having inhibitory residues in their mature region that weaken channel gating. May also play a role in apoptosis and cell proliferation. The sequence is that of Endoplasmic reticulum chaperone BiP from Pongo abelii (Sumatran orangutan).